Consider the following 263-residue polypeptide: Versicolorin reductase 1 (263 aa).

NADP(+) is bound by residues I22, D68, N95, and R128. Residues S144 and S145 each act as proton donor in the active site. Y159, K163, I192, and T194 together coordinate NADP(+). Y159 serves as the catalytic Proton acceptor. Catalysis depends on K163, which acts as the Lowers pKa of active site Tyr.

It belongs to the short-chain dehydrogenases/reductases (SDR) family.

It localises to the cytoplasm. Its subcellular location is the cytosol. It functions in the pathway mycotoxin biosynthesis. Functionally, versicolorin reductase; part of the fragmented gene cluster that mediates the biosynthesis of dothistromin (DOTH), a polyketide toxin very similar in structure to the aflatoxin precursor, versicolorin B. The first step of the pathway is the conversion of acetate to norsolorinic acid (NOR) and requires the fatty acid synthase subunits hexA and hexB, as well as the polyketide synthase pksA. PksA combines a hexanoyl starter unit and 7 malonyl-CoA extender units to synthesize the precursor NOR. The hexanoyl starter unit is provided to the acyl-carrier protein (ACP) domain by the fungal fatty acid synthase hexA/hexB. The second step is the conversion of NOR to averantin (AVN) and requires the norsolorinic acid ketoreductase nor1, which catalyzes the dehydration of norsolorinic acid to form (1'S)-averantin. The cytochrome P450 monooxygenase avnA then catalyzes the hydroxylation of AVN to 5'hydroxyaverantin (HAVN). The next step is performed by adhA that transforms HAVN to averufin (AVF). Averufin might then be converted to hydroxyversicolorone by cypX and avfA. Hydroxyversicolorone is further converted versiconal hemiacetal acetate (VHA) by moxY. VHA is then the substrate for the versiconal hemiacetal acetate esterase est1 to yield versiconal (VAL). Versicolorin B synthase vbsA then converts VAL to versicolorin B (VERB) by closing the bisfuran ring. Then, the activity of the versicolorin B desaturase verB leads to versicolorin A (VERA). DotB, a predicted chloroperoxidase, may perform epoxidation of the A-ring of VERA. Alternatively, a cytochrome P450, such as cypX or avnA could catalyze this step. It is also possible that another, uncharacterized, cytochrome P450 enzyme is responsible for this step. Opening of the epoxide could potentially be achieved by the epoxide hydrolase epoA. However, epoA seems not to be required for DOTH biosynthesis, but other epoxide hydrolases may have the ability to complement this hydrolysis. Alternatively, opening of the epoxide ring could be achieved non-enzymatically. The next step is the deoxygenation of ring A to yield the 5,8-dihydroxyanthraquinone which is most likely catalyzed by the NADPH dehydrogenase encoded by ver1. The last stages of DOTH biosynthesis are proposed to involve hydroxylation of the bisfuran. OrdB and norB might have oxidative roles here. An alternative possibility is that cytochrome P450 monoogenases such as avnA and cypX might perform these steps in addition to previously proposed steps. This is Versicolorin reductase 1 from Dothistroma septosporum (Red band needle blight fungus).